A 394-amino-acid chain; its full sequence is NADH-quinone oxidoreductase subunit D 2 (394 aa).

The protein belongs to the complex I 49 kDa subunit family. NDH-1 is composed of 14 different subunits. Subunits NuoB, C, D, E, F, and G constitute the peripheral sector of the complex.

It localises to the cell membrane. The catalysed reaction is a quinone + NADH + 5 H(+)(in) = a quinol + NAD(+) + 4 H(+)(out). NDH-1 shuttles electrons from NADH, via FMN and iron-sulfur (Fe-S) centers, to quinones in the respiratory chain. The immediate electron acceptor for the enzyme in this species is believed to be a menaquinone. Couples the redox reaction to proton translocation (for every two electrons transferred, four hydrogen ions are translocated across the cytoplasmic membrane), and thus conserves the redox energy in a proton gradient. The protein is NADH-quinone oxidoreductase subunit D 2 of Streptomyces griseus subsp. griseus (strain JCM 4626 / CBS 651.72 / NBRC 13350 / KCC S-0626 / ISP 5235).